The following is a 250-amino-acid chain: Probable transcriptional regulatory protein Nther_1800 (250 aa).

The protein belongs to the TACO1 family.

Its subcellular location is the cytoplasm. The chain is Probable transcriptional regulatory protein Nther_1800 from Natranaerobius thermophilus (strain ATCC BAA-1301 / DSM 18059 / JW/NM-WN-LF).